The sequence spans 2005 residues: Structural maintenance of chromosomes flexible hinge domain-containing protein 1 (2005 aa).

Gly residues predominate over residues 1 to 13 (MAAADGGGPGGAS). The tract at residues 1 to 23 (MAAADGGGPGGASVGTEEDGGGV) is disordered. The residue at position 2 (alanine 2) is an N-acetylalanine. The interval 111–702 (TKERIDFLPH…LSVTWPEGDE (592 aa)) is ATPase activity domain. Lysine 1349 is modified (N6-acetyllysine). Residues lysine 1374 and lysine 1496 each participate in a glycyl lysine isopeptide (Lys-Gly) (interchain with G-Cter in SUMO2) cross-link. Position 1499 is a phosphothreonine (threonine 1499). One can recognise an SMC hinge domain in the interval 1720–1847 (GDVLGKIAHL…DNLDAANHYR (128 aa)). N6-succinyllysine is present on lysine 1802. Phosphoserine is present on serine 1974.

Belongs to the SMC family. Highly divergent. Homodimer; homodimerizes via its SMC hinge domain. Interacts with LRIF1. In terms of processing, sumoylated with SUMO1.

The protein localises to the chromosome. It carries out the reaction ATP + H2O = ADP + phosphate + H(+). Functionally, non-canonical member of the structural maintenance of chromosomes (SMC) protein family that plays a key role in epigenetic silencing by regulating chromatin architecture. Promotes heterochromatin formation in both autosomes and chromosome X, probably by mediating the merge of chromatin compartments. Plays a key role in chromosome X inactivation in females by promoting the spreading of heterochromatin. Recruited to inactivated chromosome X by Xist RNA and acts by mediating the merge of chromatin compartments: promotes random chromatin interactions that span the boundaries of existing structures, leading to create a compartment-less architecture typical of inactivated chromosome X. Required to facilitate Xist RNA spreading. Also required for silencing of a subset of clustered autosomal loci in somatic cells, such as the DUX4 locus. Has ATPase activity; may participate in structural manipulation of chromatin in an ATP-dependent manner as part of its role in gene expression regulation. Also plays a role in DNA repair: localizes to sites of DNA double-strand breaks in response to DNA damage to promote the repair of DNA double-strand breaks. Acts by promoting non-homologous end joining (NHEJ) and inhibiting homologous recombination (HR) repair. The protein is Structural maintenance of chromosomes flexible hinge domain-containing protein 1 of Homo sapiens (Human).